A 402-amino-acid polypeptide reads, in one-letter code: Caspase-1 (402 aa).

The CARD domain occupies 1–91 (MADKVLRAKR…YLAEILELQS (91 aa)). Residues 1-118 (MADKVLRAKR…PFSSETKEKL (118 aa)) constitute a propeptide that is removed on maturation. Catalysis depends on residues His-236 and Cys-284. The propeptide occupies 297-314 (SVGNSEEGFLTDAIFEDD). A Phosphoserine modification is found at Ser-301.

This sequence belongs to the peptidase C14A family. Heterotetramer that consists of two anti-parallel arranged heterodimers, each one formed by a 20 kDa (Caspase-1 subunit p20) and a 10 kDa (Caspase-1 subunit p10) subunit. May be a component of the inflammasome, a protein complex which also includes PYCARD, CARD8 and NLRP2 and whose function would be the activation of pro-inflammatory caspases. Component of the AIM2 PANoptosome complex, a multiprotein complex that drives inflammatory cell death (PANoptosis). Both the p10 and p20 subunits interact with MEFV. Interacts with CARD17P/INCA and CARD18. Interacts with SERPINB1; this interaction regulates CASP1 activity. As to quaternary structure, heterotetramer that consists of two anti-parallel arranged heterodimers, each one formed by a 20 kDa (Caspase-1 subunit p20) and a 10 kDa (Caspase-1 subunit p10) subunit. In terms of processing, the two subunits are derived from the precursor sequence by an autocatalytic mechanism. Post-translationally, ubiquitinated via 'Lys-11'-linked polyubiquitination. Deubiquitinated by USP8.

It is found in the cytoplasm. The protein resides in the cell membrane. The catalysed reaction is Strict requirement for an Asp residue at position P1 and has a preferred cleavage sequence of Tyr-Val-Ala-Asp-|-.. Thiol protease involved in a variety of inflammatory processes by proteolytically cleaving other proteins, such as the precursors of the inflammatory cytokines interleukin-1 beta (IL1B) and interleukin 18 (IL18) as well as the pyroptosis inducer Gasdermin-D (GSDMD), into active mature peptides. Plays a key role in cell immunity as an inflammatory response initiator: once activated through formation of an inflammasome complex, it initiates a pro-inflammatory response through the cleavage of the two inflammatory cytokines IL1B and IL18, releasing the mature cytokines which are involved in a variety of inflammatory processes. Cleaves a tetrapeptide after an Asp residue at position P1. Also initiates pyroptosis, a programmed lytic cell death pathway, through cleavage of GSDMD. In contrast to cleavage of interleukin IL1B, recognition and cleavage of GSDMD is not strictly dependent on the consensus cleavage site but depends on an exosite interface on CASP1 that recognizes and binds the Gasdermin-D, C-terminal (GSDMD-CT) part. Cleaves and activates CASP7 in response to bacterial infection, promoting plasma membrane repair. Upon inflammasome activation, during DNA virus infection but not RNA virus challenge, controls antiviral immunity through the cleavage of CGAS, rendering it inactive. In apoptotic cells, cleaves SPHK2 which is released from cells and remains enzymatically active extracellularly. The sequence is that of Caspase-1 (Casp1) from Rattus norvegicus (Rat).